The chain runs to 140 residues: Cysteine desulfuration protein SufE (140 aa).

The active-site Cysteine persulfide intermediate is the cysteine 51.

The protein belongs to the SufE family. Homodimer. Interacts with SufS.

The protein resides in the cytoplasm. It functions in the pathway cofactor biosynthesis; iron-sulfur cluster biosynthesis. Participates in cysteine desulfuration mediated by SufS. Cysteine desulfuration mobilizes sulfur from L-cysteine to yield L-alanine and constitutes an essential step in sulfur metabolism for biosynthesis of a variety of sulfur-containing biomolecules. Functions as a sulfur acceptor for SufS, by mediating the direct transfer of the sulfur atom from the S-sulfanylcysteine of SufS, an intermediate product of cysteine desulfuration process. The chain is Cysteine desulfuration protein SufE from Yersinia pseudotuberculosis serotype O:1b (strain IP 31758).